Consider the following 250-residue polypeptide: Small ribosomal subunit protein uS2 (250 aa).

The protein belongs to the universal ribosomal protein uS2 family.

This Paraburkholderia xenovorans (strain LB400) protein is Small ribosomal subunit protein uS2.